Reading from the N-terminus, the 630-residue chain is Multidrug transporter TPO3 (630 aa).

The segment covering 1–35 (MVDQESLVSFSSETSQSINSDIDIESQQQPRQYIP) has biased composition (polar residues). Disordered stretches follow at residues 1 to 46 (MVDQ…KERL) and 107 to 157 (TSTA…NQQP). Basic and acidic residues predominate over residues 37-46 (NEKDGNKERL). Residues 125 to 137 (RRSQNIAASSNSS) show a composition bias toward low complexity. N135 carries N-linked (GlcNAc...) asparagine glycosylation. 12 consecutive transmembrane segments (helical) span residues 190–210 (ILSCLVICVAYGSACITGGLF), 222–242 (AAILSCSLMVIGFSLGPLIWS), 252–272 (LAYFISMGLYTIFNIPCALSP), 282–302 (FLCGVFSSSGLCLVGGSIADM), 312–332 (IAFFAFAPYTGPIIGPLVNGF), 342–362 (LIFWINMAFAGVMWIIVAFIP), 423–443 (FYVCLIYSLLYAFFFAFPVVF), 453–473 (LIGLMFIPILIGATMALATTF), 494–514 (LFGAMIGAPFAAAALWILGAT), 519–539 (IIWVGPASSGLAFGYGMVLIY), 553–575 (YASSALATKVFLRSAGGAAFPLF), and 587–607 (WASWLLAFISTAMILLPFGFY).

It belongs to the major facilitator superfamily. DHA1 family. Polyamines/proton antiporter (TC 2.A.1.2.16) subfamily.

It localises to the cell membrane. In terms of biological role, cell membrane polyamine/proton antiporter, involved in the detoxification of excess polyamines in the cytoplasm. Involved in the resistance to the imidazole antifungal drugs tioconazole, miconazole, clotrimazole and ketoconazole; to the triazole fluconazole; but not to the antifungals flucytosine or amphotericin B. Plays a role in spermine homeostasis, but spermine accumulation in response to clotrimazole is independent of TPO3. The polypeptide is Multidrug transporter TPO3 (Candida glabrata (strain ATCC 2001 / BCRC 20586 / JCM 3761 / NBRC 0622 / NRRL Y-65 / CBS 138) (Yeast)).